Reading from the N-terminus, the 356-residue chain is L-Lys-D/L-Arg epimerase (356 aa).

Residues Thr135 and 160–162 contribute to the substrate site; that span reads KVK. Asp190, Glu216, and Asp241 together coordinate Mg(2+). Substrate is bound by residues Lys266, Asp296, and 319 to 321; that span reads DLD.

This sequence belongs to the mandelate racemase/muconate lactonizing enzyme family. The cofactor is Mg(2+).

Functionally, catalyzes the epimerization of L-Lys-L-Arg to L-Lys-D-Arg. Can also catalyze the epimerization of other cationic dipeptides, such as L-Arg-L-Arg, L-Lys-L-Lys and L-Lys-L-His, but with lower efficiency (in vitro). The chain is L-Lys-D/L-Arg epimerase from Methylococcus capsulatus (strain ATCC 33009 / NCIMB 11132 / Bath).